Consider the following 223-residue polypeptide: Deoxyribose-phosphate aldolase 1 (223 aa).

The active-site Proton donor/acceptor is aspartate 91. The Schiff-base intermediate with acetaldehyde role is filled by lysine 154. Residue lysine 183 is the Proton donor/acceptor of the active site.

The protein belongs to the DeoC/FbaB aldolase family. DeoC type 1 subfamily.

The protein localises to the cytoplasm. The enzyme catalyses 2-deoxy-D-ribose 5-phosphate = D-glyceraldehyde 3-phosphate + acetaldehyde. It functions in the pathway carbohydrate degradation; 2-deoxy-D-ribose 1-phosphate degradation; D-glyceraldehyde 3-phosphate and acetaldehyde from 2-deoxy-alpha-D-ribose 1-phosphate: step 2/2. Functionally, catalyzes a reversible aldol reaction between acetaldehyde and D-glyceraldehyde 3-phosphate to generate 2-deoxy-D-ribose 5-phosphate. The chain is Deoxyribose-phosphate aldolase 1 from Bacillus licheniformis (strain ATCC 14580 / DSM 13 / JCM 2505 / CCUG 7422 / NBRC 12200 / NCIMB 9375 / NCTC 10341 / NRRL NRS-1264 / Gibson 46).